The sequence spans 383 residues: Aurachin C monooxygenase/isomerase (383 aa).

Residues Gly-15, Ser-47, Val-128, Asp-285, and Gly-295–Cys-299 contribute to the FAD site.

It depends on FAD as a cofactor.

It catalyses the reaction aurachin C + NADH + O2 + H(+) = 4-hydroxy-2-methyl-3-oxo-4-[(2E,6E)-farnesyl]-3,4-dihydroquinoline 1-oxide + NAD(+) + H2O. The catalysed reaction is aurachin C + NADPH + O2 + H(+) = 4-hydroxy-2-methyl-3-oxo-4-[(2E,6E)-farnesyl]-3,4-dihydroquinoline 1-oxide + NADP(+) + H2O. It carries out the reaction aurachin C + NADH + O2 + H(+) = aurachin C epoxide + NAD(+) + H2O. The enzyme catalyses aurachin C + NADPH + O2 + H(+) = aurachin C epoxide + NADP(+) + H2O. It catalyses the reaction aurachin C epoxide = 2-hydroxy-1a-methyl-7a-[(2E,6E)-farnesyl]-1a,2-dihydrooxireno[2,3-b]quinolin-7(7aH)-one. The catalysed reaction is 2-hydroxy-1a-methyl-7a-[(2E,6E)-farnesyl]-1a,2-dihydrooxireno[2,3-b]quinolin-7(7aH)-one = 4-hydroxy-2-methyl-3-oxo-4-[(2E,6E)-farnesyl]-3,4-dihydroquinoline 1-oxide. Functionally, catalyzes the initial step in the conversion of aurachin C to aurachin B. Catalyzes the epoxidation of the C(2)-C(3) double bond of aurachin C, which is followed by a semipinacol rearrangement, causing migration of the farnesyl group from C(3) to C(4). Accepts both NADH and NADPH, but has a preference for NADH. This Stigmatella aurantiaca protein is Aurachin C monooxygenase/isomerase.